Reading from the N-terminus, the 540-residue chain is MGLSHSGEIVYIHPSSPVDLFTTCASLPTKPPPSFSDMPSPLFLVSGFLGVCVAYAVANIIRQLLFPNAKEPPVVFHWFPWLGSALTYGKDPYKFLFAARAKYGDVFTFVLLGRNVTVHLGVAGNDFVFNGKETHMNAEEIYGPLCNPVFGEGVVYDCPNSKLMEQKKFVKFGLTTDALKAHVRLIEHEVVNYIKSSRDFKGPSGVINVPPVMAQITIFTAAIALQGPEVRSKLTNEFASLYHDLDGGFSPINFVLPHAPFPHNIKRDRAQLKMRKIYEAIIAERRAGKIPPTTDMISHLMQCSYKNGRPIPDSEISNMMITILMAGQHNSSNIASWIMLHLANEPQLCEELYQEQLDQLADEHGNLPELELHTVEKLKLHSSVVKETLRMHNAIHSIMRLVKQPLPVPNTSWTVPPGHAVLASPGVSANSNEYFLNPTKWDPHRWDDRVIEEDDESEMVDYGYGRTSRGTKSAYLPFGGGRHRCIGEKFAYLNLEVITAVMVRNFRFKNVDGRVDVPGTDYSTMFSRPLEPAEICWERR.

Residues 41 to 61 (PLFLVSGFLGVCVAYAVANII) traverse the membrane as a helical segment. Cysteine 485 is a binding site for heme.

It belongs to the cytochrome P450 family. The cofactor is heme.

Its subcellular location is the membrane. It catalyses the reaction a 14alpha-methyl steroid + 3 reduced [NADPH--hemoprotein reductase] + 3 O2 = a Delta(14) steroid + formate + 3 oxidized [NADPH--hemoprotein reductase] + 4 H2O + 4 H(+). The catalysed reaction is a 14alpha-methyl steroid + reduced [NADPH--hemoprotein reductase] + O2 = a 14alpha-hydroxymethyl steroid + oxidized [NADPH--hemoprotein reductase] + H2O + H(+). The enzyme catalyses a 14alpha-hydroxymethyl steroid + reduced [NADPH--hemoprotein reductase] + O2 = a 14alpha-formyl steroid + oxidized [NADPH--hemoprotein reductase] + 2 H2O + H(+). It carries out the reaction a 14alpha-formyl steroid + reduced [NADPH--hemoprotein reductase] + O2 = a Delta(14) steroid + formate + oxidized [NADPH--hemoprotein reductase] + H2O + 2 H(+). It catalyses the reaction lanosterol + 3 reduced [NADPH--hemoprotein reductase] + 3 O2 = 4,4-dimethyl-5alpha-cholesta-8,14,24-trien-3beta-ol + formate + 3 oxidized [NADPH--hemoprotein reductase] + 4 H2O + 4 H(+). The catalysed reaction is lanosterol + reduced [NADPH--hemoprotein reductase] + O2 = 32-hydroxylanosterol + oxidized [NADPH--hemoprotein reductase] + H2O + H(+). The enzyme catalyses 32-hydroxylanosterol + reduced [NADPH--hemoprotein reductase] + O2 = 32-oxolanosterol + oxidized [NADPH--hemoprotein reductase] + 2 H2O + H(+). It carries out the reaction 32-oxolanosterol + reduced [NADPH--hemoprotein reductase] + O2 = 4,4-dimethyl-5alpha-cholesta-8,14,24-trien-3beta-ol + formate + oxidized [NADPH--hemoprotein reductase] + H2O + 2 H(+). It catalyses the reaction eburicol + 3 reduced [NADPH--hemoprotein reductase] + 3 O2 = 14-demethyleburicol + formate + 3 oxidized [NADPH--hemoprotein reductase] + 4 H2O + 4 H(+). The catalysed reaction is eburicol + reduced [NADPH--hemoprotein reductase] + O2 = 32-hydroxyeburicol + oxidized [NADPH--hemoprotein reductase] + H2O + H(+). The enzyme catalyses 32-hydroxyeburicol + reduced [NADPH--hemoprotein reductase] + O2 = 32-oxoeburicol + oxidized [NADPH--hemoprotein reductase] + 2 H2O + H(+). It carries out the reaction 32-oxoeburicol + reduced [NADPH--hemoprotein reductase] + O2 = 14-demethyleburicol + formate + oxidized [NADPH--hemoprotein reductase] + H2O + 2 H(+). It functions in the pathway steroid biosynthesis; sterol biosynthesis. Functionally, sterol 14-alpha demethylase; part of the gene cluster that mediates the biosynthesis of tetrahydropyranyl antifungal agent lanomycin that acts as an inhibitor of CYP51 and blocks the ergosterol biosynthesis. Sterol 14-alpha-demethylase plays a critical role in the biosynthesis of ergosterol, the major sterol component in fungal membranes that participates in a variety of functions. Acts as a self-resistant CYP51 that contains mutations found in CYP51s isolated from azole resistance strains and that is not inhibited by the final product of the cluster, lanomycin. This is Sterol 14-alpha demethylase from Pyrenophora dematioidea (Helminthosporium dematioideum).